Here is a 395-residue protein sequence, read N- to C-terminus: METKKYGLGTTAIHAGTLKNLYGTLAMPIYQTSTFIFDSAEQGGRRFALEEAGYIYTRLGNPTTTVLENKIAALEEGEAAVATSSGMGAISSTLWTVLKAGDHVVTDKTLYGCTFALMCHGLTRFGIEVTFVDTSNLDEVKNAMKKNTRVVYLETPANPNLKIVDLEALSKLAHTNPNTLVIVDNTFATPYMQKPLKLGADIVVHSVTKYINGHGDVIAGLVITNKELADQIRFIGLKDMTGAVLGPQDAYYIIRGMKTFEIRMERHCKNAKKVVEFLNKHPKIERVYYPGLETHPGHEIAKKQMKDFGAMISFELKGGFEAGKTLLNNLKLCSLAVSLGDTETLIQHPASMTHSPYTKEEREAAGITDGLVRLSVGLENVEDIIADLEQGLEKI.

Pyridoxal 5'-phosphate is bound by residues Y56 to R58 and G86 to M87. Y111 serves as a coordination point for substrate. Position 206–208 (S206–T208) interacts with pyridoxal 5'-phosphate. K209 is modified (N6-(pyridoxal phosphate)lysine). R373 is a substrate binding site.

It belongs to the trans-sulfuration enzymes family. L-methionine gamma-lyase subfamily. As to quaternary structure, homotetramer. It depends on pyridoxal 5'-phosphate as a cofactor.

The catalysed reaction is L-methionine + H2O = methanethiol + 2-oxobutanoate + NH4(+). The enzyme catalyses L-homocysteine + H2O = 2-oxobutanoate + hydrogen sulfide + NH4(+) + H(+). Catalyzes the alpha,gamma-elimination of L-methionine to produce methanethiol, 2-oxobutanoate and ammonia; methanethiol (methyl mercaptan) is considered to be one of the main causes of the oral malodor associated with periodontitis. Also displays homocysteine desulfhydrase activity, degrading homocysteine to produce hydrogen sulfide, 2-oxobutanoate and ammonia. L-cysteine and S-methyl-L-cysteine are poor substrates for the enzyme. Its function is as follows. Plays an important role in the resistance of F.nucleatum to the antibacterial agent 3-chloro-DL-alanine (3CA), thanks to its 3CA chloride-lyase (deaminating) activity. In Fusobacterium nucleatum subsp. polymorphum (Fusobacterium polymorphum), this protein is L-methionine gamma-lyase.